Reading from the N-terminus, the 741-residue chain is Protein ACCUMULATION AND REPLICATION OF CHLOROPLASTS 3, chloroplastic (741 aa).

The N-terminal 41 residues, 1–41 (MPISMELPVFSTLRVPLFSRLALLPTFGVPFSSLGATTRLN), are a transit peptide targeting the chloroplast. Disordered regions lie at residues 444 to 465 (ENGDDSEYPLKEGEPSRNSRLD) and 539 to 558 (DSREESFFNPNGSTKDSSDT). Over residues 451–465 (YPLKEGEPSRNSRLD) the composition is skewed to basic and acidic residues. Polar residues predominate over residues 546-558 (FNPNGSTKDSSDT). 3 MORN repeats span residues 612-628 (QGGLPEGKGRLVLGDGS), 630-652 (YDGMWHNGKRSGLGTFYFKNGDV), and 653-675 (FQGTWREDLIHGKGWFYFHKGDR).

As to quaternary structure, self-interacts. Interacts with FTSZ, CDP1/PARC6 (via N-terminus), MIND1 and MINE1. Part of a complex made of ARC3, ARC6, FTSZ1 and FTSZ2. Recruited to the middle of the plastid by CDP1/PARC6 where subsequent complex made of CDP1/PARC6, ARC3 and FtsZ proteins can form; this complex enhances the dynamics of Z rings during chloroplast division. Binding to FTSZ2-1 is enabled by ARC6.

The protein localises to the plastid. Its subcellular location is the chloroplast outer membrane. The protein resides in the chloroplast stroma. Its function is as follows. Together with MIND1 and MCD1, regulates FtsZ ring positioning in chloroplasts in an ARC6-dependent manner. Z-ring accessory protein involved in the initiation of plastid division and division site placement (might functionally replace bacterial MinC). Acts as a disassembly factor that accelerates fragmentation and depolymerization of existing FtsZ2 filaments by enhancing FTSZ2 GTPase activity, thus leading to the conversion of FTSZ2 bound GTP into GDP, a process which triggers FtsZ2 filaments destabilization. Prevents misplaced Z-ring formation at chloroplast stroma nondivision sites. May control the rate of chloroplast expansion. Seems to influence stromule (stroma-filled tubular extensions of the plastid envelope membrane) length and frequency. This chain is Protein ACCUMULATION AND REPLICATION OF CHLOROPLASTS 3, chloroplastic, found in Arabidopsis thaliana (Mouse-ear cress).